The sequence spans 142 residues: Large ribosomal subunit protein uL13 (142 aa).

This sequence belongs to the universal ribosomal protein uL13 family. As to quaternary structure, part of the 50S ribosomal subunit.

Functionally, this protein is one of the early assembly proteins of the 50S ribosomal subunit, although it is not seen to bind rRNA by itself. It is important during the early stages of 50S assembly. This Pseudomonas putida (strain W619) protein is Large ribosomal subunit protein uL13.